We begin with the raw amino-acid sequence, 501 residues long: Vitamin D 25-hydroxylase (501 aa).

Ala-250 contacts substrate. A heme-binding site is contributed by Cys-448.

It belongs to the cytochrome P450 family. As to quaternary structure, homodimer. Requires heme as cofactor. Highly expressed in the liver and testis.

Its subcellular location is the endoplasmic reticulum membrane. The protein localises to the microsome membrane. The enzyme catalyses calciol + reduced [NADPH--hemoprotein reductase] + O2 = calcidiol + oxidized [NADPH--hemoprotein reductase] + H2O + H(+). It catalyses the reaction vitamin D2 + reduced [NADPH--hemoprotein reductase] + O2 = 25-hydroxyvitamin D2 + oxidized [NADPH--hemoprotein reductase] + H2O + H(+). It carries out the reaction 1alpha-hydroxyvitamin D2 + reduced [NADPH--hemoprotein reductase] + O2 = 1alpha,25-dihydroxyvitamin D2 + oxidized [NADPH--hemoprotein reductase] + H2O + H(+). The catalysed reaction is alfacalcidol + reduced [NADPH--hemoprotein reductase] + O2 = calcitriol + oxidized [NADPH--hemoprotein reductase] + H2O + H(+). It functions in the pathway hormone biosynthesis; vitamin D biosynthesis. Its function is as follows. A cytochrome P450 monooxygenase involved in activation of vitamin D precursors. Catalyzes hydroxylation at C-25 of both forms of vitamin D, vitamin D(2) and D(3) (calciol). Can metabolize vitamin D analogs/prodrugs 1alpha-hydroxyvitamin D(2) (doxercalciferol) and 1alpha-hydroxyvitamin D(3) (alfacalcidol) forming 25-hydroxy derivatives. Mechanistically, uses molecular oxygen inserting one oxygen atom into a substrate, and reducing the second into a water molecule, with two electrons provided by NADPH via cytochrome P450 reductase (CPR; NADPH-ferrihemoprotein reductase). The protein is Vitamin D 25-hydroxylase (Cyp2r1) of Mus musculus (Mouse).